Consider the following 573-residue polypeptide: Poly(ribitol-phosphate) beta-N-acetylglucosaminyltransferase TarS (573 aa).

Residues P9, D41, N68, R76, 92 to 94 (DSD), R127, and E178 each bind UDP-N-acetyl-alpha-D-glucosamine. Residue D94 coordinates Mn(2+). D179 functions as the Proton acceptor in the catalytic mechanism. Residues R207 and 211–213 (HMS) each bind UDP-N-acetyl-alpha-D-glucosamine.

It belongs to the glycosyltransferase 2 family. In terms of assembly, homotrimer. Mn(2+) is required as a cofactor.

It catalyses the reaction 4-O-[(D-ribitylphospho)(n)-di{(2R)-glycerylphospho}]-N-acetyl-beta-D-mannosaminyl-(1-&gt;4)-N-acetyl-alpha-D-glucosaminyl di-trans,octa-cis-undecaprenyl diphosphate + n UDP-N-acetyl-alpha-D-glucosamine = 4-O-([2-N-acetyl-beta-D-glucosaminyl-1-D-ribitylphospho](n)-di{[2R]-1-glycerylphospho})-N-acetyl-beta-D-mannosaminyl-(1-&gt;4)-N-acetyl-alpha-D-glucosaminyl di-trans,octa-cis-undecaprenyl diphosphate + n UDP + n H(+). Its pathway is cell wall biogenesis; poly(ribitol phosphate) teichoic acid biosynthesis. Functionally, attaches beta-O-GlcNAc (beta-O-N-acetyl-D-glucosamine) residues to the C4 position of poly(RboP)-wall teichoic acids (WTAs). Mediates beta-lactam resistance in methicillin resistant Staphylococcus aureus (MRSA) strains. This chain is Poly(ribitol-phosphate) beta-N-acetylglucosaminyltransferase TarS, found in Staphylococcus aureus (strain Mu50 / ATCC 700699).